Reading from the N-terminus, the 122-residue chain is Large ribosomal subunit protein uL18 (122 aa).

This sequence belongs to the universal ribosomal protein uL18 family. In terms of assembly, part of the 50S ribosomal subunit; part of the 5S rRNA/L5/L18/L25 subcomplex. Contacts the 5S and 23S rRNAs.

Its function is as follows. This is one of the proteins that bind and probably mediate the attachment of the 5S RNA into the large ribosomal subunit, where it forms part of the central protuberance. The protein is Large ribosomal subunit protein uL18 of Synechococcus sp. (strain JA-3-3Ab) (Cyanobacteria bacterium Yellowstone A-Prime).